The sequence spans 111 residues: Large ribosomal subunit protein uL22 (111 aa).

It belongs to the universal ribosomal protein uL22 family. In terms of assembly, part of the 50S ribosomal subunit.

Functionally, this protein binds specifically to 23S rRNA; its binding is stimulated by other ribosomal proteins, e.g. L4, L17, and L20. It is important during the early stages of 50S assembly. It makes multiple contacts with different domains of the 23S rRNA in the assembled 50S subunit and ribosome. Its function is as follows. The globular domain of the protein is located near the polypeptide exit tunnel on the outside of the subunit, while an extended beta-hairpin is found that lines the wall of the exit tunnel in the center of the 70S ribosome. The polypeptide is Large ribosomal subunit protein uL22 (Clostridium tetani (strain Massachusetts / E88)).